The sequence spans 402 residues: Candidapepsin-1 (402 aa).

Residues 1-25 (MVAIVTLTRQVLLTIALALFAQGAA) constitute a signal peptide (or 18, or 21). Positions 26-62 (IPEEAAKRDDNPGFVALDFDVLRKPLNLTEALLREKR) are cleaved as a propeptide — activation peptide. Asparagine 52 carries an N-linked (GlcNAc...) asparagine glycan. In terms of domain architecture, Peptidase A1 spans 76-389 (YASKVSVGSN…NLDANTISIA (314 aa)). The active site involves aspartate 94. The cysteines at positions 109 and 115 are disulfide-linked. Aspartate 282 is an active-site residue. Cysteine 320 and cysteine 354 form a disulfide bridge.

The protein belongs to the peptidase A1 family. Post-translationally, O-glycosylated.

The protein localises to the secreted. It carries out the reaction Preferential cleavage at the carboxyl of hydrophobic amino acids, but fails to cleave 15-Leu-|-Tyr-16, 16-Tyr-|-Leu-17 and 24-Phe-|-Phe-25 of insulin B chain. Activates trypsinogen, and degrades keratin.. This chain is Candidapepsin-1 (SAPP1), found in Candida parapsilosis (Yeast).